We begin with the raw amino-acid sequence, 324 residues long: Beta-ketoacyl-[acyl-carrier-protein] synthase III (324 aa).

Catalysis depends on residues Cys114 and His246. An ACP-binding region spans residues 247–251 (QANLR). Asn276 is a catalytic residue.

This sequence belongs to the thiolase-like superfamily. FabH family. In terms of assembly, homodimer.

The protein resides in the cytoplasm. It carries out the reaction malonyl-[ACP] + acetyl-CoA + H(+) = 3-oxobutanoyl-[ACP] + CO2 + CoA. The protein operates within lipid metabolism; fatty acid biosynthesis. Its function is as follows. Catalyzes the condensation reaction of fatty acid synthesis by the addition to an acyl acceptor of two carbons from malonyl-ACP. Catalyzes the first condensation reaction which initiates fatty acid synthesis and may therefore play a role in governing the total rate of fatty acid production. Possesses both acetoacetyl-ACP synthase and acetyl transacylase activities. Its substrate specificity determines the biosynthesis of branched-chain and/or straight-chain of fatty acids. In Campylobacter jejuni subsp. jejuni serotype O:2 (strain ATCC 700819 / NCTC 11168), this protein is Beta-ketoacyl-[acyl-carrier-protein] synthase III.